We begin with the raw amino-acid sequence, 320 residues long: tRNA dimethylallyltransferase (320 aa).

An ATP-binding site is contributed by 10 to 17 (GPTASGKT). 12 to 17 (TASGKT) provides a ligand contact to substrate. Interaction with substrate tRNA regions lie at residues 35–38 (DSAL), 159–163 (QRIQR), and 241–246 (RCVGYR).

This sequence belongs to the IPP transferase family. Monomer. Mg(2+) is required as a cofactor.

It catalyses the reaction adenosine(37) in tRNA + dimethylallyl diphosphate = N(6)-dimethylallyladenosine(37) in tRNA + diphosphate. In terms of biological role, catalyzes the transfer of a dimethylallyl group onto the adenine at position 37 in tRNAs that read codons beginning with uridine, leading to the formation of N6-(dimethylallyl)adenosine (i(6)A). This chain is tRNA dimethylallyltransferase, found in Aromatoleum aromaticum (strain DSM 19018 / LMG 30748 / EbN1) (Azoarcus sp. (strain EbN1)).